A 91-amino-acid polypeptide reads, in one-letter code: Small ribosomal subunit protein uS15c (91 aa).

It belongs to the universal ribosomal protein uS15 family. As to quaternary structure, part of the 30S ribosomal subunit.

It localises to the plastid. It is found in the chloroplast. In Eucalyptus globulus subsp. globulus (Tasmanian blue gum), this protein is Small ribosomal subunit protein uS15c (rps15).